We begin with the raw amino-acid sequence, 510 residues long: Proline--tRNA ligase (510 aa).

The protein belongs to the class-II aminoacyl-tRNA synthetase family. ProS type 3 subfamily. Homodimer.

It localises to the cytoplasm. It catalyses the reaction tRNA(Pro) + L-proline + ATP = L-prolyl-tRNA(Pro) + AMP + diphosphate. Its function is as follows. Catalyzes the attachment of proline to tRNA(Pro) in a two-step reaction: proline is first activated by ATP to form Pro-AMP and then transferred to the acceptor end of tRNA(Pro). This Sphingomonas elodea protein is Proline--tRNA ligase.